The sequence spans 89 residues: Conotoxin Lt6.4 (89 aa).

Residues 1 to 22 form the signal peptide; it reads MKLTCVPIVAMLFLMACQLITA. The propeptide occupies 23–50; the sequence is DYSREKHGYSAEKSSDKIQDSFYSKLTK. Disulfide bonds link Cys52-Cys67, Cys59-Cys71, and Cys66-Cys80.

It belongs to the conotoxin O1 superfamily. In terms of tissue distribution, expressed by the venom duct.

The protein localises to the secreted. The protein is Conotoxin Lt6.4 of Conus litteratus (Lettered cone).